The following is a 340-amino-acid chain: Beta-1,3-N-acetylglucosaminyltransferase radical fringe (340 aa).

At 1–4 the chain is on the cytoplasmic side; the sequence is MKIT. A helical; Signal-anchor for type II membrane protein transmembrane segment spans residues 5-25; sequence YVGLIKVCFLVFLLLCATVLL. The Lumenal portion of the chain corresponds to 26 to 340; it reads NISWRQRDSS…AFSLAEDPTR (315 aa). The N-linked (GlcNAc...) asparagine glycan is linked to N42. R110 serves as a coordination point for substrate. An N-linked (GlcNAc...) asparagine glycan is attached at N149. 2 disulfide bridges follow: C150/C161 and C179/C242. D183 lines the substrate pocket. D184 lines the Mn(2+) pocket. Residue D272 is part of the active site. H296 lines the Mn(2+) pocket.

Belongs to the glycosyltransferase 31 family. Mn(2+) serves as cofactor.

The protein resides in the golgi apparatus membrane. The catalysed reaction is 3-O-(alpha-L-fucosyl)-L-threonyl-[EGF-like domain protein] + UDP-N-acetyl-alpha-D-glucosamine = 3-O-(N-acetyl-beta-D-glucosaminyl-(1-&gt;3)-alpha-L-fucosyl)-L-threonyl-[EGF-like domain protein] + UDP + H(+). It carries out the reaction 3-O-(alpha-L-fucosyl)-L-seryl-[EGF-like domain protein] + UDP-N-acetyl-alpha-D-glucosamine = 3-O-(N-acetyl-beta-D-glucosaminyl-(1-&gt;3)-alpha-L-fucosyl)-L-seryl-[EGF-like domain protein] + UDP + H(+). Its function is as follows. Glycosyltransferase that initiates the elongation of O-linked fucose residues attached to EGF-like repeats in the extracellular domain of Notch molecules. The protein is Beta-1,3-N-acetylglucosaminyltransferase radical fringe (rfng) of Xenopus laevis (African clawed frog).